Consider the following 219-residue polypeptide: Beta-crystallin B2 (219 aa).

Position 2 is an N-acetylalanine (Ala-2). The interval 2–16 (ASEHQMPASKQQPAS) is N-terminal arm. Beta/gamma crystallin 'Greek key' domains lie at 17 to 56 (PNIA…LVHS) and 57 to 101 (GPWV…RPIK). A connecting peptide region spans residues 102–120 (VVRAPRQPLPTRQTKDSQE). Beta/gamma crystallin 'Greek key' domains follow at residues 121–162 (HKIV…RVQS) and 163–205 (GTWV…RRIR). The interval 207–219 (MQWHQRGAYHPSN) is C-terminal arm.

It belongs to the beta/gamma-crystallin family. As to quaternary structure, homo/heterodimer, or complexes of higher-order. The structure of beta-crystallin oligomers seems to be stabilized through interactions between the N-terminal arms.

In terms of biological role, crystallins are the dominant structural components of the vertebrate eye lens. The sequence is that of Beta-crystallin B2 (CRYBB2) from Gallus gallus (Chicken).